The following is a 601-amino-acid chain: Aspartate--tRNA(Asp/Asn) ligase (601 aa).

Position 173 (glutamate 173) interacts with L-aspartate. Residues 197-200 (QLFK) form an aspartate region. Arginine 219 provides a ligand contact to L-aspartate. ATP contacts are provided by residues 219–221 (RDE) and glutamine 228. Histidine 456 provides a ligand contact to L-aspartate. Residue glutamate 490 participates in ATP binding. Arginine 497 contacts L-aspartate. 542–545 (GWDR) serves as a coordination point for ATP. Residues 566–601 (GGGYDPLTQAPAPITAEQRRESGVDAVPDDETAPQA) form a disordered region. Acidic residues predominate over residues 592-601 (VPDDETAPQA).

The protein belongs to the class-II aminoacyl-tRNA synthetase family. Type 1 subfamily. In terms of assembly, homodimer.

Its subcellular location is the cytoplasm. The enzyme catalyses tRNA(Asx) + L-aspartate + ATP = L-aspartyl-tRNA(Asx) + AMP + diphosphate. Its function is as follows. Aspartyl-tRNA synthetase with relaxed tRNA specificity since it is able to aspartylate not only its cognate tRNA(Asp) but also tRNA(Asn). Reaction proceeds in two steps: L-aspartate is first activated by ATP to form Asp-AMP and then transferred to the acceptor end of tRNA(Asp/Asn). This chain is Aspartate--tRNA(Asp/Asn) ligase, found in Beutenbergia cavernae (strain ATCC BAA-8 / DSM 12333 / CCUG 43141 / JCM 11478 / NBRC 16432 / NCIMB 13614 / HKI 0122).